A 204-amino-acid chain; its full sequence is Signal peptidase I (204 aa).

Over 1 to 10 (MNLFKNFLKE) the chain is Cytoplasmic. Residues 11-30 (WGLFLLILSLLALSRIFFWS) form a helical membrane-spanning segment. Residues 31 to 204 (NVRVEGHSMD…FWPITRIGTF (174 aa)) lie on the Extracellular side of the membrane. Active-site residues include Ser-38 and Lys-76.

Belongs to the peptidase S26 family.

It localises to the cell membrane. The catalysed reaction is Cleavage of hydrophobic, N-terminal signal or leader sequences from secreted and periplasmic proteins.. In Streptococcus pneumoniae (strain ATCC BAA-255 / R6), this protein is Signal peptidase I (lepB).